A 563-amino-acid polypeptide reads, in one-letter code: Endogenous retroviral envelope protein HEMO (563 aa).

The signal sequence occupies residues 1–26 (MGSLSNYALLQLTLTAFLTILVQPQH). Residues 27-488 (LLAPVFRTLS…IFAKVGDWFR (462 aa)) are Extracellular-facing. 2 N-linked (GlcNAc...) asparagine glycosylation sites follow: asparagine 122 and asparagine 192. The chain crosses the membrane as a helical span at residues 489–509 (SWGYVLLIVLFCLFIFVLIYV). Topologically, residues 510 to 563 (RVFRKSRRSLNSQPLNLALSPQQSAQLLVSETSCQVSNRAMKGLTTHQYDTSLL) are cytoplasmic.

This sequence belongs to the gamma type-C retroviral envelope protein family. In terms of processing, N-glycosylated. Post-translationally, cleaved by some metalloproteinase at 432-Gln-Arg-433 (mainly) or 433-Arg-Gln-434, leading to release the secreted form (Endogenous retroviral envelope protein HEMO, secreted form) in the extracellular medium. As to expression, expressed at high level in the placenta and stem cells (at protein level). Also expressed in the kidney but at a lower level. Endogenous retroviral envelope protein HEMO, secreted form: Present in the blood of pregnant women (at protein level).

It is found in the cell membrane. Its subcellular location is the secreted. Endogenous envelope proteins originate from retroviral envelope proteins, which mediate receptor recognition and membrane fusion during early infection. Endogenous envelope proteins may have kept, lost or modified their original function during evolution. In Homo sapiens (Human), this protein is Endogenous retroviral envelope protein HEMO.